A 361-amino-acid chain; its full sequence is Glycerophosphodiester phosphodiesterase GDPD1, chloroplastic (361 aa).

Residues 1–53 (MSLKAIHVSEVPSLDHFPENPSLICSSRKANNKFVVVGHRGHGMNMSQSPDLR) constitute a chloroplast transit peptide. The region spanning 54 to 323 (FSALKENSIL…DHVEEITEAV (270 aa)) is the GP-PDE domain.

The protein belongs to the glycerophosphoryl diester phosphodiesterase family. Mg(2+) is required as a cofactor. Expressed in roots, shoots, rosette leaves, stems, flowers and siliques.

It is found in the plastid. The protein localises to the chloroplast. It carries out the reaction a sn-glycero-3-phosphodiester + H2O = an alcohol + sn-glycerol 3-phosphate + H(+). Functionally, hydrolyzes glycerolphosphoglycerol, glycerophosphocholine and glycerophosphoethanolamine in vitro. May be involved in release of inorganic phosphate (Pi) from phospholipids during Pi starvation. In Arabidopsis thaliana (Mouse-ear cress), this protein is Glycerophosphodiester phosphodiesterase GDPD1, chloroplastic.